We begin with the raw amino-acid sequence, 260 residues long: 3beta-hydroxysteroid dehydrogenase 2 (260 aa).

Residues aspartate 43, 69-70 (DV), asparagine 96, tyrosine 163, and lysine 167 contribute to the NAD(+) site. The active-site Proton acceptor is the tyrosine 163.

This sequence belongs to the short-chain dehydrogenases/reductases (SDR) family.

The catalysed reaction is 3-oxo-5beta-cholan-24-oate + NADH + H(+) = isolithocholate + NAD(+). It catalyses the reaction 12alpha-hydroxy-3-oxo-5beta-cholan-24-oate + NADH + H(+) = isodeoxycholate + NAD(+). It carries out the reaction 12alpha-hydroxy-3-oxo-5beta-cholan-24-oate + NADPH + H(+) = isodeoxycholate + NADP(+). The enzyme catalyses 7alpha,12alpha-dihydroxy-3-oxo-5beta-cholan-24-oate + NADH + H(+) = isocholate + NAD(+). The catalysed reaction is 3-oxochenodeoxycholate + NADH + H(+) = isochenodeoxycholate + NAD(+). Involved in the modification of secondary bile acids into iso-bile acids (3beta-bile acids) via epimerization of the 3-OH group through a 3-oxo-intermediate. Catalyzes the reduction of 12-alpha-hydroxy-3-oxo-5-beta-cholan-24-oate (3-oxo-DCA) and 3-oxo-5-beta-cholan-24-oate (3-oxo-LCA) to yield isodeoxycholate (isoDCA) and isolithocholate (isoLCA), respectively. Is also able to catalyze the reduction of 3-dehydrocholate (3-oxo-CA or 7alpha,12alpha-dihydroxy-3-oxo-5beta-cholan-24-oate) and 7-alpha-hydroxy-3-oxo-5-beta-cholan-24-oate (3-oxo-CDCA), into isocholate (isoCA) and isochenodeoxycholate (isoCDCA), respectively. Accepts both NADH and NADPH as cosubstrates. The conversion of the abundant bile acid deoxycholate (DCA) into isoDCA by the gut bacterium E.lenta favors the growth of the keystone commensal genus Bacteroides, since isoDCA is less cytotoxic than its parent compound, DCA; iso-bile acids have thus a potential role in modulating gut community composition. This chain is 3beta-hydroxysteroid dehydrogenase 2, found in Eggerthella lenta (strain ATCC 25559 / DSM 2243 / CCUG 17323 / JCM 9979 / KCTC 3265 / NCTC 11813 / VPI 0255 / 1899 B) (Eubacterium lentum).